A 434-amino-acid polypeptide reads, in one-letter code: CCA tRNA nucleotidyltransferase 1, mitochondrial (434 aa).

A mitochondrion-targeting transit peptide spans 1–41 (MQSVLYPWHRQVLRCSWSRLCLLKRYLFTMKLQSPEFQSLF). ATP-binding residues include glycine 64 and arginine 67. Residues glycine 64 and arginine 67 each coordinate CTP. Mg(2+) is bound by residues aspartate 77 and aspartate 79. The ATP site is built by arginine 151, aspartate 194, arginine 197, arginine 200, and arginine 203. The CTP site is built by arginine 151, aspartate 194, arginine 197, arginine 200, and arginine 203. Position 400 is a phosphoserine (serine 400). An N6-acetyllysine modification is found at lysine 402.

Belongs to the tRNA nucleotidyltransferase/poly(A) polymerase family. Monomer, and homodimer. It depends on Mg(2+) as a cofactor.

The protein localises to the mitochondrion. It localises to the cytoplasm. Its subcellular location is the nucleus. It catalyses the reaction a tRNA precursor + 2 CTP + ATP = a tRNA with a 3' CCA end + 3 diphosphate. It carries out the reaction a tRNA with a 3' CCA end + 2 CTP + ATP = a tRNA with a 3' CCACCA end + 3 diphosphate. Its function is as follows. Nucleotidyltransferase that catalyzes the addition and repair of the essential 3'-terminal CCA sequence in tRNAs, which is necessary for the attachment of amino acids to the 3' terminus of tRNA molecules, using CTP and ATP as substrates. tRNA 3'-terminal CCA addition is required both for tRNA processing and repair. Promotes tRNA repair and recycling downstream of the ribosome-associated quality control (RQC) pathway by mediating addition of the tRNA 3'-terminal CCA following cleavage by ANKZF1 and repair by ELAC1. Also involved in tRNA surveillance by mediating tandem CCA addition to generate a CCACCA at the 3' terminus of unstable tRNAs and tRNA-like transcripts. While stable tRNAs receive only 3'-terminal CCA, unstable tRNAs beginning with GG are marked with CCACCA and rapidly degraded. The structural flexibility of RNA controls the choice between CCA versus CCACCA addition: following the first CCA addition cycle, nucleotide-binding to the active site triggers a clockwise screw motion, producing torque on the RNA. This ejects stable RNAs, whereas unstable RNAs are refolded while bound to the enzyme and subjected to a second CCA catalytic cycle. The polypeptide is CCA tRNA nucleotidyltransferase 1, mitochondrial (Trnt1) (Mus musculus (Mouse)).